Consider the following 291-residue polypeptide: Undecaprenyl-diphosphatase (291 aa).

8 helical membrane-spanning segments follow: residues 1–21 (MLIL…LTEF), 48–68 (SAFT…AWVF), 99–119 (LHII…DDVI), 123–143 (LFSV…MIIA), 159–179 (INYF…WPGF), 200–220 (SDFT…LSLV), 236–256 (LGFL…LYLI), and 269–289 (IVLV…QGIT).

Belongs to the UppP family.

The protein localises to the cell membrane. The catalysed reaction is di-trans,octa-cis-undecaprenyl diphosphate + H2O = di-trans,octa-cis-undecaprenyl phosphate + phosphate + H(+). In terms of biological role, catalyzes the dephosphorylation of undecaprenyl diphosphate (UPP). Confers resistance to bacitracin. This chain is Undecaprenyl-diphosphatase, found in Staphylococcus saprophyticus subsp. saprophyticus (strain ATCC 15305 / DSM 20229 / NCIMB 8711 / NCTC 7292 / S-41).